The chain runs to 162 residues: UPF0460 protein y4xD (162 aa).

Belongs to the UPF0460 family.

The chain is UPF0460 protein y4xD from Sinorhizobium fredii (strain NBRC 101917 / NGR234).